The sequence spans 265 residues: H-2 class II histocompatibility antigen, A-Q beta chain (265 aa).

A signal peptide spans 1–27 (MALQIPSLLLSAAVVVLMVLSSPRTEG). Positions 28 to 122 (GNSERHFVAQ…VETHTSLRRL (95 aa)) are beta-1. Residues 28-227 (GNSERHFVAQ…AQSESARSKM (200 aa)) lie on the Extracellular side of the membrane. Disulfide bonds link Cys42/Cys106 and Cys145/Cys201. Asn46 carries an N-linked (GlcNAc...) asparagine glycan. Positions 123 to 217 (EQPNVAISLS…LKSPITVEWR (95 aa)) are beta-2. Residues 125-213 (PNVAISLSRT…EHPSLKSPIT (89 aa)) enclose the Ig-like C1-type domain. Residues 218-227 (AQSESARSKM) form a connecting peptide region. The chain crosses the membrane as a helical span at residues 228–247 (LSGIGGCVLGVIFLGLGLFI). The Cytoplasmic portion of the chain corresponds to 248–265 (RHRSQKGPRGPPPAGLLQ).

Belongs to the MHC class II family. Ubiquitinated in immature dendritic cells leading to down-regulation of MHC class II.

It localises to the membrane. In Mus musculus (Mouse), this protein is H-2 class II histocompatibility antigen, A-Q beta chain (H2-Ab1).